The primary structure comprises 413 residues: Probable glucan 1,3-beta-glucosidase ARB_04467 (413 aa).

The first 17 residues, 1-17, serve as a signal peptide directing secretion; it reads MKFGSLLGLSLVGLSVA. Residues Glu46, Glu202, and Tyr262 each coordinate substrate. Glu202 serves as the catalytic Proton donor. Cys282 and Cys412 form a disulfide bridge. The active-site Nucleophile is the Glu300.

This sequence belongs to the glycosyl hydrolase 5 (cellulase A) family. Monomer.

The protein localises to the secreted. The protein resides in the cell wall. The enzyme catalyses Successive hydrolysis of beta-D-glucose units from the non-reducing ends of (1-&gt;3)-beta-D-glucans, releasing alpha-glucose.. In terms of biological role, major glucan 1,3-beta-glucosidase required for cell wall integrity. Beta-glucanases participate in the metabolism of beta-glucan, the main structural component of the cell wall. Can also function biosynthetically as a transglycosylase. Functions to deliver glucan from the cell to the extracellular matrix. Involved in cell-substrate and cell-cell adhesion. This is Probable glucan 1,3-beta-glucosidase ARB_04467 from Arthroderma benhamiae (strain ATCC MYA-4681 / CBS 112371) (Trichophyton mentagrophytes).